The primary structure comprises 596 residues: Proton channel OTOP3 (596 aa).

Positions 1 to 21 (MGRGARAAAAQSRWGRASRAS) are enriched in low complexity. Residues 1 to 59 (MGRGARAAAAQSRWGRASRASVSPGRTIRSAPAVGEAQETEAAPEKENRVDVGAEERAA) form a disordered region. Over 1-88 (MGRGARAAAA…RDRQAQKAGQ (88 aa)) the chain is Cytoplasmic. Ser-21 and Ser-23 each carry phosphoserine. Basic and acidic residues predominate over residues 43–59 (APEKENRVDVGAEERAA). Residues 89–109 (LFSGLLALNVVFLGGAFICSM) form a helical membrane-spanning segment. The Extracellular segment spans residues 110–119 (IFNKVAVTLG). The chain crosses the membrane as a helical span at residues 120–143 (DVWILLATLKVLSLLWLLYYVAST). The Cytoplasmic segment spans residues 144-159 (TRRPHAVLYQDPHAGP). Residues 160–181 (LWVRGSLVLFGSCTFCLNIFRV) traverse the membrane as a helical segment. Over 182–193 (GYDVSHIRCKSQ) the chain is Extracellular. Residues 194–217 (LDLVFSVIEMVFIGVQTWVLWKHC) traverse the membrane as a helical segment. Over 218 to 225 (KDCVRVQT) the chain is Cytoplasmic. A helical membrane pass occupies residues 226–248 (NFTRCGLMLTLATNLLLWVLAVT). Over 249–295 (NDSMHREIEAELGILMEKSTGNETNTCLCLNATACEAFRRGFLMLYP) the chain is Extracellular. The chain crosses the membrane as a helical span at residues 296–312 (FSTEYCLICCAVLFVMW). At 313–338 (KNVGRHVAPHMGAHPATAPFHLHGAI) the chain is on the cytoplasmic side. A helical membrane pass occupies residues 339–358 (FGPLLGLLVLLAGVCVFVLF). The Extracellular portion of the chain corresponds to 359-372 (QIEASGPAIACQYF). A helical membrane pass occupies residues 373-395 (TLYYAFYVAVLPTMSLACLAGTA). Residues 396 to 413 (IHGLEERELDTVKNPTRS) lie on the Cytoplasmic side of the membrane. A helical membrane pass occupies residues 414–435 (LDVVLLMGAALGQMGIAYFSIV). The Extracellular portion of the chain corresponds to 436–446 (AIVAKRPHELL). Residues 447–469 (NRLILAYSLLLILQHIAQNLFII) form a helical membrane-spanning segment. Residues 470 to 529 (EGLHRRPLWETVPEGLAGKQEAEPPRRGSLLELGQGLQRASLAYIHSYSHLNWKRRALKE) are Cytoplasmic-facing. A helical transmembrane segment spans residues 530–547 (ISLFLILCNITLWMMPAF). Residues 548-566 (GIHPEFENGLEKDFYGYQI) lie on the Extracellular side of the membrane. The chain crosses the membrane as a helical span at residues 567 to 589 (WFAIVNFGLPLGVFYRMHSVGGL). Over 590–596 (VEVYLGA) the chain is Cytoplasmic.

This sequence belongs to the otopetrin family. Homodimer.

Its subcellular location is the cell membrane. The catalysed reaction is H(+)(in) = H(+)(out). Activated by extracellular acidification. Activated by Zn(2+) under non-acidic conditions. Its function is as follows. Proton-selective channel gated by extracellular protons. The protein is Proton channel OTOP3 of Homo sapiens (Human).